The chain runs to 535 residues: MGCNQSKSANDVRGNKVNNVNSKKKNNKREDINDGEEIAINPGMYVRKKEGKIGESYFKVRKLGSGAYGEVLLCKEKNGHSEKAIKVIKKSQFDKGRYNDDNKNIEKFHEEIYNEISLLKSLDHPNIIKLFDVFEDKKYFYLVTEFYEGGELFEQIINRHKFDECDAANIMKQILSGICYLHKHNIVHRDIKPENILLENKNSLLNIKIVDFGLSSFFSKDYKLRDRLGTAYYIAPEVLKKKYNEKCDVWSCGVIMYILLCGYPPFGGQNDQDIIKKVEKGKYYFDFNDWKNISDEAKELIKLMLTYDYNKRCTAEEALNSRWIKKYANNINKSDQKTLCGALSNMRKFEGSQKLAQAAILFIGSKLTTLEERKELTDIFKKLDKNGDGQLDKKELIEGYNVLRNFKNELGELKNVEEEVDNILKEVDFDKNGYIEYSEFISVCMDKQILFSEERLRRAFNLFDTDKSGKITKEELANVIIRGFYFFTYSLFGLTSVSEKTWNDVLGEADQNKDNMIDFDEFVSMMHKICDNKPF.

Residues 1-34 (MGCNQSKSANDVRGNKVNNVNSKKKNNKREDIND) form a disordered region. Glycine 2 is lipidated: N-myristoyl glycine. Cysteine 3 carries S-palmitoyl cysteine lipidation. The region spanning 57 to 324 (YFKVRKLGSG…AEEALNSRWI (268 aa)) is the Protein kinase domain. Residues 63 to 71 (LGSGAYGEV) and lysine 86 contribute to the ATP site. Residue serine 65 is modified to Phosphoserine. Serine 117 is subject to Phosphoserine. The active-site Proton acceptor is the aspartate 190. 2 positions are modified to phosphoserine: serine 216 and serine 219. A Phosphothreonine modification is found at threonine 230. Serine 334 bears the Phosphoserine mark. Residues 345–352 (NMRKFEGS) carry the J domain autoinhibitory motif motif. Residues 345 to 363 (NMRKFEGSQKLAQAAILFI) are j domain. A J domain interacts with the EF-hand domains motif is present at residues 353 to 363 (QKLAQAAILFI). EF-hand domains lie at 371–406 (EERKELTDIFKKLDKNGDGQLDKKELIEGYNVLRNF), 415–450 (NVEEEVDNILKEVDFDKNGYIEYSEFISVCMDKQIL), 451–486 (FSEERLRRAFNLFDTDKSGKITKEELANVIIRGFYF), and 497–532 (VSEKTWNDVLGEADQNKDNMIDFDEFVSMMHKICDN). 20 residues coordinate Ca(2+): aspartate 384, asparagine 386, aspartate 388, glutamine 390, glutamate 395, aspartate 428, aspartate 430, asparagine 432, tyrosine 434, glutamate 439, aspartate 464, aspartate 466, serine 468, lysine 470, glutamate 475, aspartate 510, asparagine 512, aspartate 514, methionine 516, and glutamate 521.

Belongs to the protein kinase superfamily. Ser/Thr protein kinase family. CDPK subfamily. In terms of assembly, monomer. Mg(2+) is required as a cofactor. Myristoylated. Myristoylation and palmitoylation are required for the localization to the parasitophorous vacuole membrane. In terms of processing, palmitoylated. Palmitoylation increases in merozoites in response to low level of extracellular K(+) in the host blood. Myristoylation and palmitoylation are required for the localization to the parasitophorous vacuole membrane. Post-translationally, phosphorylation at Thr-230 may regulate CDPK1 kinase activity. Phosphorylation increases in response to an increase in intracellular Ca(2+) levels. Autophosphorylated in vitro. Autophosphorylation does not affect membrane localization in vitro.

Its subcellular location is the membrane. The protein resides in the cell membrane. The protein localises to the parasitophorous vacuole membrane. It localises to the cytoplasm. It is found in the cell projection. Its subcellular location is the cilium. The protein resides in the flagellum. The protein localises to the host cell membrane. The catalysed reaction is L-seryl-[protein] + ATP = O-phospho-L-seryl-[protein] + ADP + H(+). The enzyme catalyses L-threonyl-[protein] + ATP = O-phospho-L-threonyl-[protein] + ADP + H(+). Its activity is regulated as follows. Activated by calcium. Upon calcium binding to the EF-hand domains, the C-terminus of the junction domain (J domain) undergoes a conformational change which results in the dissociation of the pseudo-substrate inhibitory motif from the catalytic domain. This, in turn may facilitate the autophosphorylation of the activation loop at Thr-230, which leads to the kinase activation. Its function is as follows. Calcium-dependent protein kinase which acts as a sensor and effector of intracellular Ca(2+) levels probably in part downstream of cGMP-activated PKG kinase. During the liver stage, involved in sporozoite motility and thus in sporozoite invasion of host hepatocytes, probably together with CDPK4 and CDPK5. In the mosquito midgut and during the last stage of male gamete exflagellation, may play a role in the rupture of the host erythrocyte membrane. In the mosquito midgut, required for the differentiation of the zygote into the ookinete by promoting the translational activation of a subset of repressed mRNAs; these mRNAs are kept repressed in the zygote by the DOZI- or CITH-containing mRNP complexes. Dispensable during the asexual blood stage. This is Calcium-dependent protein kinase 1 from Plasmodium yoelii yoelii.